We begin with the raw amino-acid sequence, 855 residues long: Envelope glycoprotein gp160 (855 aa).

The first 31 residues, 1 to 31, serve as a signal peptide directing secretion; that stretch reads MRAREIERNCPNLWKWGIMLLGILMICSAAD. Topologically, residues 32-683 are extracellular; sequence NLWVTVYYGV…ITQWLWYIKI (652 aa). Residues cysteine 53 and cysteine 73 are joined by a disulfide bond. N-linked (GlcNAc...) asparagine; by host glycosylation is found at asparagine 87, asparagine 129, asparagine 140, asparagine 145, asparagine 154, asparagine 158, asparagine 186, asparagine 189, asparagine 199, asparagine 236, asparagine 243, asparagine 264, asparagine 278, asparagine 291, and asparagine 297. 5 disulfide bridges follow: cysteine 118/cysteine 207, cysteine 125/cysteine 198, cysteine 130/cysteine 155, cysteine 220/cysteine 249, and cysteine 230/cysteine 241. Positions 130–154 are V1; the sequence is CTDESDEWMGNVTGKNVTEDIRMKN. The V2 stretch occupies residues 155-198; the sequence is CSFNITTVVRDKTKQVHALFYRLDIVPIDNDNSTNSTNYRLINC. The tract at residues 298-331 is V3; that stretch reads CTRPYKNTRQSTPIGLGQALYTTRGRTKIIGQAH. A disulfide bridge links cysteine 298 with cysteine 332. N-linked (GlcNAc...) asparagine; by host glycosylation is found at asparagine 333, asparagine 340, and asparagine 355. Positions 364 to 374 are CD4-binding loop; it reads SSGGDAEITTH. 2 disulfides stabilise this stretch: cysteine 378/cysteine 444 and cysteine 385/cysteine 417. A V4 region spans residues 385–417; it reads CNTSGLFNSTWNINNSEGANSTESDNKLITLQC. 9 N-linked (GlcNAc...) asparagine; by host glycosylation sites follow: asparagine 386, asparagine 392, asparagine 398, asparagine 404, asparagine 443, asparagine 447, asparagine 460, asparagine 461, and asparagine 464. 2 V5 regions span residues 459 to 470 and 462 to 470; these read TNNSSNETFRPG and SSNETFRPG. A fusion peptide region spans residues 511–531; sequence AIGLGAMFLGFLGAAGSTMGA. The tract at residues 573–591 is immunosuppression; it reads KQLQARILAVERYLKDQQL. Cysteine 597 and cysteine 603 are oxidised to a cystine. Asparagine 610, asparagine 615, asparagine 624, asparagine 636, and asparagine 673 each carry an N-linked (GlcNAc...) asparagine; by host glycan. The stretch at 632 to 666 forms a coiled coil; that stretch reads REIDNYTGLIYRLIEESQTQQEKNEQELLELDKWA. The MPER; binding to GalCer stretch occupies residues 661-682; it reads ELDKWASLWNWFNITQWLWYIK. The chain crosses the membrane as a helical span at residues 684-704; the sequence is FIMIVGGLIGLRIVFAVLSLV. The Cytoplasmic portion of the chain corresponds to 705 to 855; it reads NRVRQGYSPL…IRQGLERLLL (151 aa). Residues 711 to 714 carry the YXXL motif; contains endocytosis signal motif; that stretch reads YSPL. Residue cysteine 763 is the site of S-palmitoyl cysteine; by host attachment. Positions 854–855 match the Di-leucine internalization motif motif; the sequence is LL.

This sequence belongs to the HIV-1 env protein family. The mature envelope protein (Env) consists of a homotrimer of non-covalently associated gp120-gp41 heterodimers. The resulting complex protrudes from the virus surface as a spike. There seems to be as few as 10 spikes on the average virion. Interacts with host CD4, CCR5 and CXCR4. Gp120 also interacts with the C-type lectins CD209/DC-SIGN and CLEC4M/DC-SIGNR (collectively referred to as DC-SIGN(R)). Gp120 and gp41 interact with GalCer. Gp120 interacts with host ITGA4/ITGB7 complex; on CD4+ T-cells, this interaction results in rapid activation of integrin ITGAL/LFA-1, which facilitates efficient cell-to-cell spreading of HIV-1. Gp120 interacts with cell-associated heparan sulfate; this interaction increases virus infectivity on permissive cells and may be involved in infection of CD4- cells. As to quaternary structure, the mature envelope protein (Env) consists of a homotrimer of non-covalently associated gp120-gp41 heterodimers. The resulting complex protrudes from the virus surface as a spike. There seems to be as few as 10 spikes on the average virion. Highly glycosylated by host. The high number of glycan on the protein is reffered to as 'glycan shield' because it contributes to hide protein sequence from adaptive immune system. In terms of processing, palmitoylation of the transmembrane protein and of Env polyprotein (prior to its proteolytic cleavage) is essential for their association with host cell membrane lipid rafts. Palmitoylation is therefore required for envelope trafficking to classical lipid rafts, but not for viral replication. Post-translationally, specific enzymatic cleavages in vivo yield mature proteins. Envelope glycoproteins are synthesized as an inactive precursor that is heavily N-glycosylated and processed likely by host cell furin in the Golgi to yield the mature SU and TM proteins. The cleavage site between SU and TM requires the minimal sequence [KR]-X-[KR]-R. About 2 of the 9 disulfide bonds of gp41 are reduced by P4HB/PDI, following binding to CD4 receptor.

Its subcellular location is the virion membrane. The protein resides in the host cell membrane. The protein localises to the host endosome membrane. Its function is as follows. Oligomerizes in the host endoplasmic reticulum into predominantly trimers. In a second time, gp160 transits in the host Golgi, where glycosylation is completed. The precursor is then proteolytically cleaved in the trans-Golgi and thereby activated by cellular furin or furin-like proteases to produce gp120 and gp41. In terms of biological role, attaches the virus to the host lymphoid cell by binding to the primary receptor CD4. This interaction induces a structural rearrangement creating a high affinity binding site for a chemokine coreceptor like CXCR4 and/or CCR5. Acts as a ligand for CD209/DC-SIGN and CLEC4M/DC-SIGNR, which are respectively found on dendritic cells (DCs), and on endothelial cells of liver sinusoids and lymph node sinuses. These interactions allow capture of viral particles at mucosal surfaces by these cells and subsequent transmission to permissive cells. HIV subverts the migration properties of dendritic cells to gain access to CD4+ T-cells in lymph nodes. Virus transmission to permissive T-cells occurs either in trans (without DCs infection, through viral capture and transmission), or in cis (following DCs productive infection, through the usual CD4-gp120 interaction), thereby inducing a robust infection. In trans infection, bound virions remain infectious over days and it is proposed that they are not degraded, but protected in non-lysosomal acidic organelles within the DCs close to the cell membrane thus contributing to the viral infectious potential during DCs' migration from the periphery to the lymphoid tissues. On arrival at lymphoid tissues, intact virions recycle back to DCs' cell surface allowing virus transmission to CD4+ T-cells. Functionally, acts as a class I viral fusion protein. Under the current model, the protein has at least 3 conformational states: pre-fusion native state, pre-hairpin intermediate state, and post-fusion hairpin state. During fusion of viral and target intracellular membranes, the coiled coil regions (heptad repeats) assume a trimer-of-hairpins structure, positioning the fusion peptide in close proximity to the C-terminal region of the ectodomain. The formation of this structure appears to drive apposition and subsequent fusion of viral and target cell membranes. Complete fusion occurs in host cell endosomes and is dynamin-dependent, however some lipid transfer might occur at the plasma membrane. The virus undergoes clathrin-dependent internalization long before endosomal fusion, thus minimizing the surface exposure of conserved viral epitopes during fusion and reducing the efficacy of inhibitors targeting these epitopes. Membranes fusion leads to delivery of the nucleocapsid into the cytoplasm. The chain is Envelope glycoprotein gp160 from Homo sapiens (Human).